The chain runs to 1402 residues: Transcription factor SPT20 homolog (1402 aa).

Disordered stretches follow at residues 1–29, 60–107, 114–133, 177–206, 786–817, 1136–1174, and 1199–1250; these read MNGN…EQEQ, VNSL…LDTD, NNDS…SSSS, QTTL…NNIL, APST…PTPV, PQQI…QYQT, and QPLQ…PPQI. Positions 7-29 are enriched in basic and acidic residues; it reads VHTEENKNEHQQEGKGGEQEQEQ. Polar residues predominate over residues 60–72; the sequence is VNSLSEPTPNEQQ. The segment covering 73–102 has biased composition (low complexity); it reads NNNNNNNSNGNGNGNDETTSSKTTTIINSN. 6 stretches are compositionally biased toward low complexity: residues 183–204, 786–812, 1136–1150, 1157–1174, 1199–1218, and 1226–1250; these read NNNN…NNNN, APST…TTPT, PQQI…PPNQ, SPQS…QYQT, QPLQ…QQQQ, and PQQF…PPQI.

This sequence belongs to the SPT20 family.

This chain is Transcription factor SPT20 homolog, found in Dictyostelium discoideum (Social amoeba).